We begin with the raw amino-acid sequence, 319 residues long: MIACHVIAIVSAFILDKWLGDPKWLPHPVVGMGKLITYFERRWNCGRWRREKGVLLLLTVLLIVTALSLALVWLSYQVHLLLGVIVEALLIASTIAAKGLKEAAEEVARPLATRNLLEARRKLSYIVGRDTDQLDEKEIARGAIETVAENTSDGVTAPLFYALIGGAPLALLYRATNTCDSMVGYKNERYRDFGWASAKFDDVLNWVPSRITGVLMLLLHRKRRQAPLGQSLKMLAREAKKHPSPNSGWGEAAMALLLHVTLGGTNTYQGMTSERAKMGYGTKAMTAKDIDESIAIMNRTVLGFLVFLFLLGGFIYAIT.

3 consecutive transmembrane segments (helical) span residues 54-76, 154-173, and 301-318; these read VLLL…WLSY, GVTA…ALLY, and VLGF…IYAI.

The protein belongs to the CobD/CbiB family.

It is found in the cell membrane. It participates in cofactor biosynthesis; adenosylcobalamin biosynthesis. Functionally, converts cobyric acid to cobinamide by the addition of aminopropanol on the F carboxylic group. The protein is Cobalamin biosynthesis protein CobD of Halalkalibacterium halodurans (strain ATCC BAA-125 / DSM 18197 / FERM 7344 / JCM 9153 / C-125) (Bacillus halodurans).